Here is a 237-residue protein sequence, read N- to C-terminus: tRNA (guanine-N(7)-)-methyltransferase (237 aa).

Positions 67, 92, 119, and 141 each coordinate S-adenosyl-L-methionine. Asp141 is an active-site residue. Substrate contacts are provided by residues Lys145, Asp177, and 214–217; that span reads TRYE.

Belongs to the class I-like SAM-binding methyltransferase superfamily. TrmB family.

The enzyme catalyses guanosine(46) in tRNA + S-adenosyl-L-methionine = N(7)-methylguanosine(46) in tRNA + S-adenosyl-L-homocysteine. The protein operates within tRNA modification; N(7)-methylguanine-tRNA biosynthesis. Functionally, catalyzes the formation of N(7)-methylguanine at position 46 (m7G46) in tRNA. This is tRNA (guanine-N(7)-)-methyltransferase from Jannaschia sp. (strain CCS1).